The sequence spans 562 residues: Calcium-dependent protein kinase 5 (562 aa).

A Protein kinase domain is found at 118-372; that stretch reads ELDKYKLGKG…VHKIVNHKWF (255 aa). ATP is bound by residues 124-132 and Lys-147; that span reads LGKGSYGNV. Asp-238 acts as the Proton acceptor in catalysis. The J domain autoinhibitory motif motif lies at 394 to 402; it reads KFKKFHKLC. Residues 394-429 are j domain; sequence KFKKFHKLCKIKKLAITCIAYQLNKKKFGKMKKTFE. Residues 403–412 carry the J domain EF-hand interaction motif motif; the sequence is KIKKLAITCI. EF-hand domains lie at 419-453, 454-489, 490-525, and 528-562; these read KKFG…VGDN, EIDR…HSIL, EQDA…SNDQ, and FSKE…GRQS. Residues Asp-432, Asn-434, Asp-436, Glu-443, Asp-467, Asp-469, Asn-471, Glu-478, Asp-503, Asn-505, Asp-507, Glu-514, Asp-541, Asn-543, Asp-545, Tyr-547, and Glu-552 each contribute to the Ca(2+) site.

It belongs to the protein kinase superfamily. Ser/Thr protein kinase family. CDPK subfamily. It depends on Mg(2+) as a cofactor. In terms of processing, may be palmitoylated. Autophosphorylated in vitro.

Its subcellular location is the cytoplasm. The protein resides in the cytoplasmic vesicle. It is found in the secretory vesicle. The protein localises to the microneme membrane. It localises to the cell membrane. It catalyses the reaction L-seryl-[protein] + ATP = O-phospho-L-seryl-[protein] + ADP + H(+). The enzyme catalyses L-threonyl-[protein] + ATP = O-phospho-L-threonyl-[protein] + ADP + H(+). With respect to regulation, activated by calcium. Upon calcium binding to the EF-hand domains, the C-terminus of the junction domain (J domain) undergoes a conformational change which results in the dissociation of the pseudo-substrate inhibitory motif from the catalytic domain. This, in turn, may facilitate the autophosphorylation of the activation loop at Thr-278, which leads to the kinase activation. Calcium-dependent protein kinase which acts as a sensor and effector of intracellular Ca(2+) levels probably in part downstream of cGMP-activated PKG kinase. Plays a central role in host erythrocytes and hepatocytes infection cycles. During the liver stage, involved in sporozoite motility and thus in sporozoite invasion of host hepatocytes, probably together with CDPK1 and CDPK4. Involved in merosome egress from host hepatocytes, probably together with CDPK4. Required for the release of hepatic merozoites from merosomes in the host blood stream. During the asexual blood stage, required for merozoite egress from host erythrocytes by triggering microneme secretion. Phosphorylates transporter NPT1 at late schizont stage. The polypeptide is Calcium-dependent protein kinase 5 (Plasmodium berghei (strain Anka)).